A 352-amino-acid polypeptide reads, in one-letter code: MIEPDRLISAVSGREREEQLDRAIRPLKLADYIGQPSVREQMELFIHAARGRQEALDHTLIFGPPGLGKTTLANIIAQEMGVSIKSTSGPVLERPGDLAALLTNLEAGDVLFVDEIHRLSPIVEEVLYPAMEDFQLDIMIGEGPAARSIKLDLPPFTLVGATTRAGMLTNPLRDRFGIVQRLEFYNVEDLATIVSRSAGILGLQIETQGAAEIAKRARGTPRIANRLLRRVRDFAEVRGQGDITRVIADKALNLLDVDERGFDHLDRRLLLTMIDKFDGGPVGIDNLAAALSEERHTIEDVLEPYLIQQGYIMRTPRGRVVTRHAYLHFGLNIPKRLGPGVTSDLFTSEDGN.

A large ATPase domain (RuvB-L) region spans residues 4–185 (PDRLISAVSG…FGIVQRLEFY (182 aa)). ATP is bound by residues I24, R25, G66, K69, T70, T71, 132–134 (EDF), R175, Y185, and R222. Residue T70 coordinates Mg(2+). Positions 186-256 (NVEDLATIVS…IADKALNLLD (71 aa)) are small ATPAse domain (RuvB-S). The segment at 259 to 352 (ERGFDHLDRR…SDLFTSEDGN (94 aa)) is head domain (RuvB-H). Residues R295, R314, and R319 each contribute to the DNA site.

It belongs to the RuvB family. Homohexamer. Forms an RuvA(8)-RuvB(12)-Holliday junction (HJ) complex. HJ DNA is sandwiched between 2 RuvA tetramers; dsDNA enters through RuvA and exits via RuvB. An RuvB hexamer assembles on each DNA strand where it exits the tetramer. Each RuvB hexamer is contacted by two RuvA subunits (via domain III) on 2 adjacent RuvB subunits; this complex drives branch migration. In the full resolvosome a probable DNA-RuvA(4)-RuvB(12)-RuvC(2) complex forms which resolves the HJ.

Its subcellular location is the cytoplasm. The catalysed reaction is ATP + H2O = ADP + phosphate + H(+). Its function is as follows. The RuvA-RuvB-RuvC complex processes Holliday junction (HJ) DNA during genetic recombination and DNA repair, while the RuvA-RuvB complex plays an important role in the rescue of blocked DNA replication forks via replication fork reversal (RFR). RuvA specifically binds to HJ cruciform DNA, conferring on it an open structure. The RuvB hexamer acts as an ATP-dependent pump, pulling dsDNA into and through the RuvAB complex. RuvB forms 2 homohexamers on either side of HJ DNA bound by 1 or 2 RuvA tetramers; 4 subunits per hexamer contact DNA at a time. Coordinated motions by a converter formed by DNA-disengaged RuvB subunits stimulates ATP hydrolysis and nucleotide exchange. Immobilization of the converter enables RuvB to convert the ATP-contained energy into a lever motion, pulling 2 nucleotides of DNA out of the RuvA tetramer per ATP hydrolyzed, thus driving DNA branch migration. The RuvB motors rotate together with the DNA substrate, which together with the progressing nucleotide cycle form the mechanistic basis for DNA recombination by continuous HJ branch migration. Branch migration allows RuvC to scan DNA until it finds its consensus sequence, where it cleaves and resolves cruciform DNA. The protein is Holliday junction branch migration complex subunit RuvB of Pseudomonas paraeruginosa (strain DSM 24068 / PA7) (Pseudomonas aeruginosa (strain PA7)).